Here is a 609-residue protein sequence, read N- to C-terminus: MEQNSNSSVADTFAEAPATDADYGTENCSGSGMSVGDTVSANHEFQTMKPGPGVVHKVMPVANSASSATATNGRTRSEMPHSELVKMLYYLEGELQARDVCIAALRNERVKQLIAQLRTKRLQPNDPYAAIFRDKIALNGNLISRESSTQAAQAEMEVRQIIEQQMEQQYQMVSKQRATHVRMVNILTESLENNQRMLQELEEEKRKHENTTAQGDDITYGLELERNKLKQDLEEERAQVAKMEKDLKKLQETLEYERNRQKQIVLLLIAERKKILMKYIEEGKRSEDLAQILAEEKQRSDTIAEGLEEESKKSLRMEEELEKQTHAMEQERKVLFAKLAKEELRVKELEQELNALRSEHEALKKQQQLGGSGSSVAAAKARQFSDDACATPPMVNIAKIVQPTATVSSMPVSGPQTGIARSIAPGQNIRSAGIATAPTGTATAAIAPLTAVLNHTTTITTTTNNTTTSSNSNSSGSIGVAATAAAVAASVETAATVTVPMVAPPSPSPAKMQPTATIQRAPGGKYAALAAAAALDQTTTPHPHPVPIAVPPVTVPPAGARGAPPPIPTKPIVPPKREPSLSRLGSITGSSAIAAATAATTAAGTAKQN.

Residues 1 to 10 (MEQNSNSSVA) are compositionally biased toward polar residues. A disordered region spans residues 1-29 (MEQNSNSSVADTFAEAPATDADYGTENCS). 2 coiled-coil regions span residues 182–264 (RMVN…QKQI) and 303–370 (IAEG…QQLG). The segment at 556 to 584 (PPAGARGAPPPIPTKPIVPPKREPSLSRL) is disordered. Residues 563-574 (APPPIPTKPIVP) show a composition bias toward pro residues. Ser586 is subject to Phosphoserine.

It localises to the cell projection. Its subcellular location is the lamellipodium. The protein localises to the cytoplasm. It is found in the cytoskeleton. The protein resides in the stress fiber. Functionally, regulates lamellipodial actin dynamics in a Cortactin-dependent manner and is therefore likely involved in controlling actin branch density, actin-retrograde flow rates and lamellipodial protrusion. Functions by slowing the dissociation of Cortactin from Arp2/3 nucleated branches thereby increasing branch nucleation and junction stability. Associates with core striatin-interacting phosphatase and kinase (STRIPAK) complex to form CTTNBP2NL-STRIPAK complexes. STRIPAK complexes have critical roles in protein (de)phosphorylation and are regulators of multiple signaling pathways including Hippo, MAPK, nuclear receptor and cytoskeleton remodeling. Different types of STRIPAK complexes are involved in a variety of biological processes such as cell growth, differentiation, apoptosis, metabolism and immune regulation. This Drosophila melanogaster (Fruit fly) protein is CTTNBP2 N-terminal-like protein.